The following is a 401-amino-acid chain: Argininosuccinate synthase (401 aa).

An ATP-binding site is contributed by alanine 8–serine 16. Tyrosine 87 lines the L-citrulline pocket. Glycine 117 serves as a coordination point for ATP. 3 residues coordinate L-aspartate: threonine 119, asparagine 123, and aspartate 124. Asparagine 123 is an L-citrulline binding site. 4 residues coordinate L-citrulline: arginine 127, serine 175, glutamate 259, and tyrosine 271.

This sequence belongs to the argininosuccinate synthase family. Type 1 subfamily. Homotetramer.

It localises to the cytoplasm. It carries out the reaction L-citrulline + L-aspartate + ATP = 2-(N(omega)-L-arginino)succinate + AMP + diphosphate + H(+). The protein operates within amino-acid biosynthesis; L-arginine biosynthesis; L-arginine from L-ornithine and carbamoyl phosphate: step 2/3. This is Argininosuccinate synthase from Arthrobacter sp. (strain FB24).